The sequence spans 532 residues: Pre-piRNA 3'-exonuclease trimmer (532 aa).

Mg(2+) contacts are provided by Asp-28, Glu-30, Asp-270, and Asp-365. A helical transmembrane segment spans residues 503–523; that stretch reads AGRFAIWSGSIVTGGLALYLI.

It belongs to the CAF1 family. In terms of assembly, interacts with Papi/Tdrkh; interaction takes place on the mitochondrial surface and recruits PNLDC1/trimmer to PIWI-bound pre-piRNAs. It depends on Mg(2+) as a cofactor.

The protein resides in the mitochondrion outer membrane. In terms of biological role, 3'-5' exonuclease that specifically cleaves precursor piRNAs (pre-piRNAs) at their 3' ends. Trims pre-piRNAs to their mature size, a process required for piRNAs maturation and stabilization, and subsequent pre-piRNAs 2'-O-methylation. The piRNA metabolic process mediates the repression of transposable elements during meiosis by forming complexes composed of piRNAs and Piwi proteins and govern the methylation and subsequent repression of transposons. This Bombyx mori (Silk moth) protein is Pre-piRNA 3'-exonuclease trimmer.